The following is a 270-amino-acid chain: Tryptophan synthase alpha chain (270 aa).

Catalysis depends on proton acceptor residues Glu-50 and Asp-61.

Belongs to the TrpA family. In terms of assembly, tetramer of two alpha and two beta chains.

The enzyme catalyses (1S,2R)-1-C-(indol-3-yl)glycerol 3-phosphate + L-serine = D-glyceraldehyde 3-phosphate + L-tryptophan + H2O. Its pathway is amino-acid biosynthesis; L-tryptophan biosynthesis; L-tryptophan from chorismate: step 5/5. Its function is as follows. The alpha subunit is responsible for the aldol cleavage of indoleglycerol phosphate to indole and glyceraldehyde 3-phosphate. The polypeptide is Tryptophan synthase alpha chain (Chlorobium luteolum (strain DSM 273 / BCRC 81028 / 2530) (Pelodictyon luteolum)).